A 768-amino-acid polypeptide reads, in one-letter code: Photosystem I P700 chlorophyll a apoprotein A1 (768 aa).

8 consecutive transmembrane segments (helical) span residues 76 to 99 (VFSA…FHGA), 162 to 185 (LMAL…YHYH), 201 to 225 (LNHH…HIGA), 310 to 328 (ISHH…GHLY), 369 to 392 (WHAQ…HHMY), 408 to 434 (LGLF…IAMI), 456 to 478 (ALIS…LYIH), and 559 to 577 (FMIH…LILL). 2 residues coordinate [4Fe-4S] cluster: cysteine 601 and cysteine 610. 2 helical membrane-spanning segments follow: residues 617–638 (HVFL…HFSW) and 682–704 (ISMY…MFLF). Residue histidine 693 participates in divinylchlorophyll a' binding. Divinyl chlorophyll a contacts are provided by methionine 701 and tyrosine 709. Tryptophan 710 is a binding site for phylloquinone. A helical membrane pass occupies residues 742 to 762 (AVGAAHFLLGGIATTWAFFHA).

Belongs to the PsaA/PsaB family. As to quaternary structure, the PsaA/B heterodimer binds the P700 divinyl chlorophyll special pair and subsequent electron acceptors. PSI consists of a core antenna complex that captures photons, and an electron transfer chain that converts photonic excitation into a charge separation. The cyanobacterial PSI reaction center is composed of one copy each of PsaA,B,C,D,E,F,I,J,K,L,M and X, and forms trimeric complexes. Requires PSI electron transfer chain: 5 divinyl chlorophyll a, 1 divinyl chlorophyll a', 2 phylloquinones and 3 4Fe-4S clusters. PSI core antenna: 90 divinyl chlorophyll a, 22 carotenoids, 3 phospholipids and 1 galactolipid. P700 is a divinyl chlorophyll a/divinyl chlorophyll a' dimer, A0 is one or more divinyl chlorophyll a, A1 is one or both phylloquinones and FX is a shared 4Fe-4S iron-sulfur center. as cofactor.

It localises to the cellular thylakoid membrane. The catalysed reaction is reduced [plastocyanin] + hnu + oxidized [2Fe-2S]-[ferredoxin] = oxidized [plastocyanin] + reduced [2Fe-2S]-[ferredoxin]. PsaA and PsaB bind P700, the primary electron donor of photosystem I (PSI), as well as the electron acceptors A0, A1 and FX. PSI is a plastocyanin/cytochrome c6-ferredoxin oxidoreductase, converting photonic excitation into a charge separation, which transfers an electron from the donor P700 chlorophyll pair to the spectroscopically characterized acceptors A0, A1, FX, FA and FB in turn. Oxidized P700 is reduced on the lumenal side of the thylakoid membrane by plastocyanin or cytochrome c6. The polypeptide is Photosystem I P700 chlorophyll a apoprotein A1 (Prochlorococcus marinus (strain NATL2A)).